The primary structure comprises 156 residues: Small ribosomal subunit protein uS7 (156 aa).

Belongs to the universal ribosomal protein uS7 family. In terms of assembly, part of the 30S ribosomal subunit. Contacts proteins S9 and S11.

Its function is as follows. One of the primary rRNA binding proteins, it binds directly to 16S rRNA where it nucleates assembly of the head domain of the 30S subunit. Is located at the subunit interface close to the decoding center, probably blocks exit of the E-site tRNA. The polypeptide is Small ribosomal subunit protein uS7 (Pelotomaculum thermopropionicum (strain DSM 13744 / JCM 10971 / SI)).